A 192-amino-acid polypeptide reads, in one-letter code: Adenylate kinase (192 aa).

12–17 (GSGKTT) contacts ATP. An NMP region spans residues 33-62 (STGDLLRAEVAKDSELGKKIDKIISGGNLV). AMP-binding positions include threonine 34, arginine 39, 60 to 62 (NLV), 87 to 90 (GYPR), and glutamine 94. The segment at 129–135 (GRARGAD) is LID. Arginine 130 is an ATP binding site. The AMP site is built by arginine 132 and arginine 144. Arginine 172 serves as a coordination point for ATP.

Belongs to the adenylate kinase family. As to quaternary structure, monomer.

The protein resides in the cytoplasm. The enzyme catalyses AMP + ATP = 2 ADP. It functions in the pathway purine metabolism; AMP biosynthesis via salvage pathway; AMP from ADP: step 1/1. In terms of biological role, catalyzes the reversible transfer of the terminal phosphate group between ATP and AMP. Plays an important role in cellular energy homeostasis and in adenine nucleotide metabolism. The protein is Adenylate kinase of Campylobacter hominis (strain ATCC BAA-381 / DSM 21671 / CCUG 45161 / LMG 19568 / NCTC 13146 / CH001A).